A 93-amino-acid chain; its full sequence is Pyrimidine/purine nucleoside phosphorylase (93 aa).

The protein belongs to the nucleoside phosphorylase PpnP family.

It carries out the reaction a purine D-ribonucleoside + phosphate = a purine nucleobase + alpha-D-ribose 1-phosphate. It catalyses the reaction adenosine + phosphate = alpha-D-ribose 1-phosphate + adenine. The enzyme catalyses cytidine + phosphate = cytosine + alpha-D-ribose 1-phosphate. The catalysed reaction is guanosine + phosphate = alpha-D-ribose 1-phosphate + guanine. It carries out the reaction inosine + phosphate = alpha-D-ribose 1-phosphate + hypoxanthine. It catalyses the reaction thymidine + phosphate = 2-deoxy-alpha-D-ribose 1-phosphate + thymine. The enzyme catalyses uridine + phosphate = alpha-D-ribose 1-phosphate + uracil. The catalysed reaction is xanthosine + phosphate = alpha-D-ribose 1-phosphate + xanthine. Catalyzes the phosphorolysis of diverse nucleosides, yielding D-ribose 1-phosphate and the respective free bases. Can use uridine, adenosine, guanosine, cytidine, thymidine, inosine and xanthosine as substrates. Also catalyzes the reverse reactions. The protein is Pyrimidine/purine nucleoside phosphorylase of Tolumonas auensis (strain DSM 9187 / NBRC 110442 / TA 4).